Here is a 127-residue protein sequence, read N- to C-terminus: Large-conductance mechanosensitive channel (127 aa).

Transmembrane regions (helical) follow at residues 9–29 (EFAMRGNVMDLAVAVVMGVAF), 32–52 (IVTALVDGIIMPCVGLLLGGV), and 75–95 (VIDFIIVAFAIFVLIKLINLL).

Belongs to the MscL family. Homopentamer.

The protein localises to the cell inner membrane. Functionally, channel that opens in response to stretch forces in the membrane lipid bilayer. May participate in the regulation of osmotic pressure changes within the cell. The protein is Large-conductance mechanosensitive channel of Legionella pneumophila (strain Corby).